The primary structure comprises 156 residues: MGFTDKQEALVRDSWEFMKQDIPQLSLRFFSLILEIAPVAKNMFSFLKDSDELPENNPKLRAHAVKVFKMTCESAIQLREKGEVVVGETTLKYLGSIHLQKRVADPHFEVVKEALLRTVKEATGNKWKDEMKEAWSEAYDQLASAIKAEMHAEAAA.

Positions 2–151 (GFTDKQEALV…LASAIKAEMH (150 aa)) constitute a Globin domain. A Homodimerization motif is present at residues 35 to 39 (EIAPV). Heme b-binding residues include Ser-45, Lys-59, His-63, and His-98. The Homodimerization signature appears at 105 to 117 (DPHFEVVKEALLR).

It belongs to the plant globin family. As to quaternary structure, homodimer. Requires heme b as cofactor.

The protein localises to the cytoplasm. The protein resides in the nucleus. It carries out the reaction Fe(III)-heme b-[protein] + nitric oxide + H2O = Fe(II)-heme b-[protein] + nitrite + 2 H(+). Functionally, phytoglobin that reduces nitrite to nitric oxide (NO) under anoxic conditions (e.g. during flooding or in waterlogged soil). May not function as an oxygen storage or transport protein. Has an unusually high affinity for O(2) through an hexacoordinate heme iron because of a very low dissociation constant. In Solanum lycopersicum (Tomato), this protein is Anaerobic nitrite reductase HB2.